A 248-amino-acid chain; its full sequence is Triosephosphate isomerase (248 aa).

At Thr4 the chain carries Phosphothreonine. Asn10 and Lys12 together coordinate substrate. Ser71 bears the Phosphoserine mark. The active-site Electrophile is His95. Catalysis depends on Glu165, which acts as the Proton acceptor. Ser215 bears the Phosphoserine mark. A Glycyl lysine isopeptide (Lys-Gly) (interchain with G-Cter in ubiquitin) cross-link involves residue Lys223.

This sequence belongs to the triosephosphate isomerase family. Homodimer.

The enzyme catalyses D-glyceraldehyde 3-phosphate = dihydroxyacetone phosphate. The protein operates within carbohydrate biosynthesis; gluconeogenesis. It functions in the pathway carbohydrate degradation; glycolysis; D-glyceraldehyde 3-phosphate from glycerone phosphate: step 1/1. This chain is Triosephosphate isomerase (TPI1), found in Saccharomyces cerevisiae (strain ATCC 204508 / S288c) (Baker's yeast).